Here is a 557-residue protein sequence, read N- to C-terminus: 2-succinyl-5-enolpyruvyl-6-hydroxy-3-cyclohexene-1-carboxylate synthase (557 aa).

It belongs to the TPP enzyme family. MenD subfamily. As to quaternary structure, homodimer. Mg(2+) is required as a cofactor. Mn(2+) serves as cofactor. The cofactor is thiamine diphosphate.

It carries out the reaction isochorismate + 2-oxoglutarate + H(+) = 5-enolpyruvoyl-6-hydroxy-2-succinyl-cyclohex-3-ene-1-carboxylate + CO2. It participates in quinol/quinone metabolism; 1,4-dihydroxy-2-naphthoate biosynthesis; 1,4-dihydroxy-2-naphthoate from chorismate: step 2/7. Its pathway is quinol/quinone metabolism; menaquinone biosynthesis. In terms of biological role, catalyzes the thiamine diphosphate-dependent decarboxylation of 2-oxoglutarate and the subsequent addition of the resulting succinic semialdehyde-thiamine pyrophosphate anion to isochorismate to yield 2-succinyl-5-enolpyruvyl-6-hydroxy-3-cyclohexene-1-carboxylate (SEPHCHC). This is 2-succinyl-5-enolpyruvyl-6-hydroxy-3-cyclohexene-1-carboxylate synthase from Serratia proteamaculans (strain 568).